The sequence spans 369 residues: Peptide chain release factor 2 (369 aa).

Position 251 is an N5-methylglutamine (Gln-251).

This sequence belongs to the prokaryotic/mitochondrial release factor family. Post-translationally, methylated by PrmC. Methylation increases the termination efficiency of RF2.

It is found in the cytoplasm. Its function is as follows. Peptide chain release factor 2 directs the termination of translation in response to the peptide chain termination codons UGA and UAA. The chain is Peptide chain release factor 2 (prfB) from Chlamydia muridarum (strain MoPn / Nigg).